The chain runs to 150 residues: Peptide deformylase (150 aa).

Fe cation-binding residues include cysteine 88 and histidine 130. Glutamate 131 is an active-site residue. Histidine 134 serves as a coordination point for Fe cation.

Belongs to the polypeptide deformylase family. Fe(2+) is required as a cofactor.

The catalysed reaction is N-terminal N-formyl-L-methionyl-[peptide] + H2O = N-terminal L-methionyl-[peptide] + formate. Functionally, removes the formyl group from the N-terminal Met of newly synthesized proteins. Requires at least a dipeptide for an efficient rate of reaction. N-terminal L-methionine is a prerequisite for activity but the enzyme has broad specificity at other positions. The protein is Peptide deformylase of Desulfitobacterium hafniense (strain DSM 10664 / DCB-2).